The following is a 76-amino-acid chain: Exodeoxyribonuclease 7 small subunit (76 aa).

It belongs to the XseB family. In terms of assembly, heterooligomer composed of large and small subunits.

It localises to the cytoplasm. It catalyses the reaction Exonucleolytic cleavage in either 5'- to 3'- or 3'- to 5'-direction to yield nucleoside 5'-phosphates.. Bidirectionally degrades single-stranded DNA into large acid-insoluble oligonucleotides, which are then degraded further into small acid-soluble oligonucleotides. The protein is Exodeoxyribonuclease 7 small subunit of Legionella pneumophila (strain Paris).